The chain runs to 440 residues: Putative purine permease YwdJ (440 aa).

13 helical membrane-spanning segments follow: residues 3 to 23 (LVLG…VVPV), 39 to 59 (LIQS…LKGH), 67 to 87 (PAGL…TVFA), 96 to 116 (LQGA…FKVI), 130 to 150 (VYLL…ILGI), 156 to 176 (GVDG…FIMT), 188 to 208 (ILLA…AKPI), 231 to 251 (GLII…LASM), 283 to 303 (LLSG…AGFI), 314 to 334 (FMLG…MNTF), 341 to 361 (VGFA…FAEF), 374 to 394 (SIIG…ETAL), and 399 to 419 (PVFI…AIAA).

It belongs to the nucleobase:cation symporter-2 (NCS2) (TC 2.A.40) family.

The protein resides in the cell membrane. The protein is Putative purine permease YwdJ (ywdJ) of Bacillus subtilis (strain 168).